We begin with the raw amino-acid sequence, 275 residues long: Trypsin-3 (275 aa).

The signal sequence occupies residues 1–22 (MISNKIAILLAVLVVAVACAQA). Residues 23–48 (RVALKHRSVQALPRFLPRPKYDVGHR) constitute a propeptide, activation peptide. In terms of domain architecture, Peptidase S1 spans 49–274 (IVGGFEIDVS…VRDWVRENSG (226 aa)). Residues cysteine 74 and cysteine 90 are joined by a disulfide bond. Active-site charge relay system residues include histidine 89 and aspartate 134. 2 disulfides stabilise this stretch: cysteine 199-cysteine 215 and cysteine 226-cysteine 250. Serine 230 functions as the Charge relay system in the catalytic mechanism.

The protein belongs to the peptidase S1 family. As to expression, expressed in the midgut. Expression levels drop a few hours after blood feeding and pick up again 28 hours later.

The protein localises to the secreted. It carries out the reaction Preferential cleavage: Arg-|-Xaa, Lys-|-Xaa.. Functionally, constitutive trypsin that is expressed 2 days after emergence, coinciding with host seeking behavior of the female. The protein is Trypsin-3 (TRYP3) of Anopheles gambiae (African malaria mosquito).